Consider the following 494-residue polypeptide: MDGSSEKTTNKLVSILPNYRIGKTLGHGSFAKVKLALHVATGHKVAIKILNRSKIKNMGIEIKVQREIKILRFLMHPHIIRQYEVIETPNDIYVVMEYVKSGELFDYIVEKGKLQEDEARHLFQQIISGVEYCHRNMIVHRDLKPENVLLDSQCNIKIVDFGLSNVMHDGHFLKTSCGSPNYAAPEVISGKPYGPDVDIWSCGVILYALLCGTLPFDDENIPNVFEKIKRGMYTLPNHLSHFARDLIPRMLMVDPTMRISITEIRQHPWFNNHLPLYLSIPPLDTIDQAKKIEEEIIQNVVNIGFDRNHVVDSLANRIQNEATVAYHLILDNRNQNSVPNDPFQSKFKEISDGIFNSTLPVQNITSHVGHSFSALYGLKSNVKDDKTWTLGLQSQGSPYDIMTEIFKALQNLKICWKKIGLYNIKCRWVRSFAYYKNHTIEDECAIILPTVIKFEIQLYKVREGKYLLDILRIDGPQFIFFDLCVAFLRELGVL.

The region spanning 19 to 270 is the Protein kinase domain; sequence YRIGKTLGHG…ITEIRQHPWF (252 aa). Residues 25 to 33 and Lys-48 contribute to the ATP site; that span reads LGHGSFAKV. The active-site Proton acceptor is Asp-142. Thr-175 bears the Phosphothreonine mark. The segment at 289 to 386 is auto-inhibitory domain (AID); sequence AKKIEEEIIQ…GLKSNVKDDK (98 aa). Residues 291 to 331 enclose the UBA domain; it reads KIEEEIIQNVVNIGFDRNHVVDSLANRIQNEATVAYHLILD. The segment at 293–494 is regulatory domain (RD); that stretch reads EEEIIQNVVN…VAFLRELGVL (202 aa). The segment at 387-494 is PPI; sequence TWTLGLQSQG…VAFLRELGVL (108 aa). One can recognise a KA1 domain in the interval 445-493; sequence AIILPTVIKFEIQLYKVREGKYLLDILRIDGPQFIFFDLCVAFLRELGV.

Belongs to the protein kinase superfamily. CAMK Ser/Thr protein kinase family. SNF1 subfamily. In terms of assembly, subunit of a probable heterotrimeric complex consisting of an alpha catalytic subunit, and a beta (KINB) and a gamma (KING or SNF4) non-catalytic regulatory subunits. Post-translationally, autophosphorylated. In terms of tissue distribution, expressed at very low levels.

The catalysed reaction is L-seryl-[protein] + ATP = O-phospho-L-seryl-[protein] + ADP + H(+). The enzyme catalyses L-threonyl-[protein] + ATP = O-phospho-L-threonyl-[protein] + ADP + H(+). Activated by phosphorylation at Thr-175. Its function is as follows. Catalytic subunit of the probable trimeric SNF1-related protein kinase (SnRK) complex, a central regulator of cellular energy homeostasis, which, in response to seemingly unrelated darkness, sugar and stress conditions, activates energy-producing pathways and inhibits energy-consuming processes. May also be involved in the regulation of fatty acid synthesis by phosphorylation of acetyl-CoA carboxylase and in assimilation of nitrogen by phosphorylating nitrate reductase. The chain is SNF1-related protein kinase catalytic subunit alpha KIN12 from Arabidopsis thaliana (Mouse-ear cress).